The chain runs to 195 residues: Imidazoleglycerol-phosphate dehydratase (195 aa).

The protein belongs to the imidazoleglycerol-phosphate dehydratase family.

The protein resides in the cytoplasm. It carries out the reaction D-erythro-1-(imidazol-4-yl)glycerol 3-phosphate = 3-(imidazol-4-yl)-2-oxopropyl phosphate + H2O. The protein operates within amino-acid biosynthesis; L-histidine biosynthesis; L-histidine from 5-phospho-alpha-D-ribose 1-diphosphate: step 6/9. The protein is Imidazoleglycerol-phosphate dehydratase of Geobacillus sp. (strain WCH70).